Consider the following 283-residue polypeptide: Acetylglutamate kinase (283 aa).

Residues 63–64 (GG), Arg-85, and Asn-178 each bind substrate.

The protein belongs to the acetylglutamate kinase family. ArgB subfamily.

It is found in the plastid. Its subcellular location is the chloroplast. The catalysed reaction is N-acetyl-L-glutamate + ATP = N-acetyl-L-glutamyl 5-phosphate + ADP. Its pathway is amino-acid biosynthesis; L-arginine biosynthesis; N(2)-acetyl-L-ornithine from L-glutamate: step 2/4. Functionally, catalyzes the ATP-dependent phosphorylation of N-acetyl-L-glutamate. This is Acetylglutamate kinase from Porphyra purpurea (Red seaweed).